The primary structure comprises 347 residues: GMP reductase (347 aa).

108-131 (ADFEKTKQILDLNPALNFVCIDVA) lines the NADP(+) pocket. The K(+) site is built by glycine 181 and glycine 183. The active-site Thioimidate intermediate is the cysteine 186. 216-239 (IVSDGGCTTPGDVAKAFGGGADFV) provides a ligand contact to NADP(+).

This sequence belongs to the IMPDH/GMPR family. GuaC type 1 subfamily. Homotetramer.

It catalyses the reaction IMP + NH4(+) + NADP(+) = GMP + NADPH + 2 H(+). Functionally, catalyzes the irreversible NADPH-dependent deamination of GMP to IMP. It functions in the conversion of nucleobase, nucleoside and nucleotide derivatives of G to A nucleotides, and in maintaining the intracellular balance of A and G nucleotides. In Escherichia coli O127:H6 (strain E2348/69 / EPEC), this protein is GMP reductase.